The primary structure comprises 51 residues: UPF0391 membrane protein Psyc_0130 (51 aa).

Helical transmembrane passes span Ile6 to Leu26 and Ala28 to Val47.

It belongs to the UPF0391 family.

It localises to the cell membrane. This chain is UPF0391 membrane protein Psyc_0130, found in Psychrobacter arcticus (strain DSM 17307 / VKM B-2377 / 273-4).